Consider the following 107-residue polypeptide: Replication initiation control protein YabA (107 aa).

Zn(2+) is bound by residues H81, C83, C97, and C100.

This sequence belongs to the YabA family. In terms of assembly, homotetramer. Interacts with both DnaA and DnaN, acting as a bridge between these two proteins. Requires Zn(2+) as cofactor.

The protein localises to the cytoplasm. It localises to the nucleoid. Its function is as follows. Involved in control of chromosome replication initiation. Inhibits the cooperative binding of DnaA to the oriC region, thus negatively regulating initiation of chromosome replication. Inhibits the ability of DnaA-ATP to form a helix on DNA; does not disassemble preformed DnaA-DNA helices. Decreases the residence time of DnaA on the chromosome at its binding sites (oriC, replication forks and promoter-binding sites). Tethers DnaA to the replication machinery via the DNA polymerase beta sliding clamp subunit (dnaN). Associates with oriC and other DnaA targets on the chromosome in a DnaA-dependent manner. In Streptococcus equi subsp. equi (strain 4047), this protein is Replication initiation control protein YabA.